Consider the following 889-residue polypeptide: Disease resistance protein UNI (889 aa).

A coiled-coil region spans residues 19–64; sequence NCLIGKSYIRTLEKNLRALQREMEDLRAIQHEVQNKVARDEARHQR. Positions 131 to 152 are disordered; sequence GNFDEVSQPPPRSEVEERPTQP. In terms of domain architecture, NB-ARC spans 137–440; sequence SQPPPRSEVE…CEGFIGEDQV (304 aa). 179 to 186 contacts ATP; sequence GMGGVGKT. LRR repeat units follow at residues 510 to 532, 533 to 555, 557 to 580, 581 to 603, 604 to 625, 626 to 652, 653 to 676, 698 to 721, and 825 to 848; these read WGAVRKMSLMDNDIEEITCESKC, SELTTLFLQSNKLKNLPGAFIRY, QKLVVLDLSYNRDFNKLPEQISGL, VSLQFLDLSNTSIEHMPIGLKEL, KKLTFLDLTYTDRLCSISGISR, LLSLRLLRLLGSKVHGDASVLKELQQL, QNLQELAITVSAELISLDQRLAKL, MENLSSLRVENSYFSEIKCRESET, and CPKLRKLPLNATSVSKVEEFEIHM.

It belongs to the disease resistance NB-LRR family. In terms of assembly, interacts with RPT2A.

Its function is as follows. Involved in disease resistance via the salicylic acid (SA) signaling pathway. Involved in shoot architecture development via the cytokinin signaling pathway. The chain is Disease resistance protein UNI from Arabidopsis thaliana (Mouse-ear cress).